Reading from the N-terminus, the 228-residue chain is Transcription termination/antitermination protein NusG (228 aa).

Belongs to the NusG family.

Participates in transcription elongation, termination and antitermination. This chain is Transcription termination/antitermination protein NusG, found in Mycobacterium leprae (strain TN).